Consider the following 679-residue polypeptide: Methionine--tRNA ligase (679 aa).

A 'HIGH' region motif is present at residues 14 to 24; sequence PYANGSIHLGH. Residues cysteine 145, cysteine 148, cysteine 158, and cysteine 161 each contribute to the Zn(2+) site. The short motif at 331-335 is the 'KMSKS' region element; sequence KMSKS. Lysine 334 provides a ligand contact to ATP. The tRNA-binding domain maps to 577-679; that stretch reads TFAAVDLRVA…SGAKPGQRIK (103 aa).

The protein belongs to the class-I aminoacyl-tRNA synthetase family. MetG type 1 subfamily. In terms of assembly, homodimer. Requires Zn(2+) as cofactor.

Its subcellular location is the cytoplasm. It catalyses the reaction tRNA(Met) + L-methionine + ATP = L-methionyl-tRNA(Met) + AMP + diphosphate. Functionally, is required not only for elongation of protein synthesis but also for the initiation of all mRNA translation through initiator tRNA(fMet) aminoacylation. The chain is Methionine--tRNA ligase from Pseudomonas putida (strain GB-1).